The chain runs to 295 residues: Large ribosomal subunit protein uL29m (295 aa).

The protein belongs to the universal ribosomal protein uL29 family. In terms of assembly, component of the mitochondrial large ribosomal subunit. Mature mitochondrial ribosomes consist of a small (37S) and a large (54S) subunit. The 37S subunit contains at least 33 different proteins and 1 molecule of RNA (15S). The 54S subunit contains at least 45 different proteins and 1 molecule of RNA (21S).

Its subcellular location is the mitochondrion. The polypeptide is Large ribosomal subunit protein uL29m (MRPL4) (Meyerozyma guilliermondii (strain ATCC 6260 / CBS 566 / DSM 6381 / JCM 1539 / NBRC 10279 / NRRL Y-324) (Yeast)).